Here is an 81-residue protein sequence, read N- to C-terminus: Short neurotoxin D (81 aa).

Residues M1–T21 form the signal peptide. Cystine bridges form between C24-C43, C38-C60, C62-C73, and C74-C79.

It belongs to the three-finger toxin family. Short-chain subfamily. Type I alpha-neurotoxin sub-subfamily. As to expression, expressed by the venom gland.

The protein resides in the secreted. In terms of biological role, binds to muscle nicotinic acetylcholine receptor (nAChR) and inhibit acetylcholine from binding to the receptor, thereby impairing neuromuscular transmission. This is Short neurotoxin D from Aipysurus laevis (Olive sea snake).